The following is a 362-amino-acid chain: Dihydroorotate dehydrogenase (quinone) (362 aa).

FMN is bound by residues 62-66 (AGYDK) and Thr-86. Substrate is bound at residue Lys-66. Residue 111-115 (NRLGF) coordinates substrate. 2 residues coordinate FMN: Asn-139 and Asn-170. Asn-170 contributes to the substrate binding site. Ser-173 functions as the Nucleophile in the catalytic mechanism. Asn-175 provides a ligand contact to substrate. FMN contacts are provided by Lys-215 and Ser-243. 244–245 (NT) provides a ligand contact to substrate. Residues Gly-266, Gly-295, and 316-317 (YS) contribute to the FMN site.

It belongs to the dihydroorotate dehydrogenase family. Type 2 subfamily. In terms of assembly, monomer. FMN serves as cofactor.

Its subcellular location is the cell membrane. The catalysed reaction is (S)-dihydroorotate + a quinone = orotate + a quinol. Its pathway is pyrimidine metabolism; UMP biosynthesis via de novo pathway; orotate from (S)-dihydroorotate (quinone route): step 1/1. In terms of biological role, catalyzes the conversion of dihydroorotate to orotate with quinone as electron acceptor. The protein is Dihydroorotate dehydrogenase (quinone) of Sinorhizobium medicae (strain WSM419) (Ensifer medicae).